Consider the following 252-residue polypeptide: Transmembrane ascorbate-dependent reductase CYB561 (252 aa).

M1 bears the N-acetylmethionine mark. Topologically, residues 1–17 (MESPAGRTPAPGALPYY) are cytoplasmic. A helical transmembrane segment spans residues 18–38 (VAFSQLLGLTVVAVTGAWLGA). The Cytochrome b561 domain maps to 20–221 (FSQLLGLTVV…FGAVVLYILT (202 aa)). Residues 39–52 (YRGGIAWESALQFN) lie on the Vesicular side of the membrane. A helical membrane pass occupies residues 53 to 73 (VHPLCMIIGLVFLQGDALLVY). H54, R74, and K81 together coordinate heme b. Over 74 to 85 (RVFRNEAKRTTK) the chain is Cytoplasmic. Positions 81 and 85 each coordinate L-ascorbate. The helical transmembrane segment at 86 to 106 (ILHGLLHVLAFVIALVGLVAV) threads the bilayer. Residues H88, 117–120 (DLYS), and H122 each bind heme b. At 107–125 (FDYHRKKGIADLYSLHSWC) the chain is on the vesicular side. Residues 126–146 (GILVFVLFLAQWLVGLGFFLF) traverse the membrane as a helical segment. Topologically, residues 147 to 159 (PGASFSLRSRYRP) are cytoplasmic. R154 contributes to the L-ascorbate binding site. Residues 160–180 (QHVFFGAAIFLLSVGTALLGL) form a helical membrane-spanning segment. Residues H161 and E182 each contribute to the heme b site. The Vesicular segment spans residues 181-199 (KEALLFQLGTKYSAFESEG). A helical transmembrane segment spans residues 200-220 (VLANVLGLLLVAFGAVVLYIL). Residues 221-252 (TRADWKRPLQAEEQALSMDFKTLTEGDSPSSQ) lie on the Cytoplasmic side of the membrane. K226 lines the heme b pocket. A phosphoserine mark is found at S248 and S250.

It depends on heme b as a cofactor.

It localises to the cytoplasmic vesicle. It is found in the secretory vesicle. The protein localises to the chromaffin granule membrane. The enzyme catalyses monodehydro-L-ascorbate radical(out) + L-ascorbate(in) = monodehydro-L-ascorbate radical(in) + L-ascorbate(out). In terms of biological role, transmembrane reductase that uses ascorbate as an electron donor in the cytoplasm and transfers electrons across membranes to reduce monodehydro-L-ascorbate radical in the lumen of secretory vesicles. It is therefore involved the regeneration and homeostasis within secretory vesicles of ascorbate which in turn provides reducing equivalents needed to support the activity of intravesicular enzymes. This chain is Transmembrane ascorbate-dependent reductase CYB561 (CYB561), found in Sus scrofa (Pig).